We begin with the raw amino-acid sequence, 244 residues long: Carbonic anhydrase (244 aa).

An N-terminal signal peptide occupies residues 1 to 19 (MKGKLSIALMLSVCFSASA). Positions 23–244 (VHWGYEGNGD…QPLNGRIIIH (222 aa)) constitute an Alpha-carbonic anhydrase domain. Cys-46 and Cys-199 form a disulfide bridge. His-84 serves as the catalytic Proton acceptor. Zn(2+) is bound by residues His-109, His-111, and His-128. Position 195–196 (195–196 (TT)) interacts with substrate.

This sequence belongs to the alpha-carbonic anhydrase family. The cofactor is Zn(2+).

It localises to the periplasm. It catalyses the reaction hydrogencarbonate + H(+) = CO2 + H2O. Reversible hydration of carbon dioxide. The polypeptide is Carbonic anhydrase (cah) (Pectobacterium carotovorum (Erwinia carotovora)).